Consider the following 181-residue polypeptide: Crossover junction endodeoxyribonuclease RuvC (181 aa).

Residues Asp8, Glu67, and Asp139 contribute to the active site. The Mg(2+) site is built by Asp8, Glu67, and Asp139.

This sequence belongs to the RuvC family. Homodimer which binds Holliday junction (HJ) DNA. The HJ becomes 2-fold symmetrical on binding to RuvC with unstacked arms; it has a different conformation from HJ DNA in complex with RuvA. In the full resolvosome a probable DNA-RuvA(4)-RuvB(12)-RuvC(2) complex forms which resolves the HJ. It depends on Mg(2+) as a cofactor.

It localises to the cytoplasm. It catalyses the reaction Endonucleolytic cleavage at a junction such as a reciprocal single-stranded crossover between two homologous DNA duplexes (Holliday junction).. Functionally, the RuvA-RuvB-RuvC complex processes Holliday junction (HJ) DNA during genetic recombination and DNA repair. Endonuclease that resolves HJ intermediates. Cleaves cruciform DNA by making single-stranded nicks across the HJ at symmetrical positions within the homologous arms, yielding a 5'-phosphate and a 3'-hydroxyl group; requires a central core of homology in the junction. The consensus cleavage sequence is 5'-(A/T)TT(C/G)-3'. Cleavage occurs on the 3'-side of the TT dinucleotide at the point of strand exchange. HJ branch migration catalyzed by RuvA-RuvB allows RuvC to scan DNA until it finds its consensus sequence, where it cleaves and resolves the cruciform DNA. The protein is Crossover junction endodeoxyribonuclease RuvC of Acinetobacter baumannii (strain SDF).